The following is a 419-amino-acid chain: Effector protein BipC (419 aa).

Disordered regions lie at residues 62–91 and 338–402; these read VAGSGAQRVELARPKPDAQTRATDRRTVSG and LQSG…AKSQ. 2 stretches are compositionally biased toward basic and acidic residues: residues 71 to 91 and 380 to 392; these read ELARPKPDAQTRATDRRTVSG and TRDEAAHRSREAA.

The protein belongs to the SctB/SipC family.

It localises to the secreted. The polypeptide is Effector protein BipC (bipC) (Burkholderia mallei (strain NCTC 10247)).